The following is a 441-amino-acid chain: Keratin, type I cytoskeletal 17 (441 aa).

The interval 1 to 23 (MTTTIRHFSSGSIKGSSGLAGGS) is disordered. Residues 1–91 (MTTTIRHFSS…GGVDGLLVGG (91 aa)) form a head region. Over residues 9 to 23 (SSGSIKGSSGLAGGS) the composition is skewed to low complexity. Residue Ser12 is modified to Phosphoserine. A Glycyl lysine isopeptide (Lys-Gly) (interchain with G-Cter in SUMO1); alternate cross-link involves residue Lys14. Lys14 participates in a covalent cross-link: Glycyl lysine isopeptide (Lys-Gly) (interchain with G-Cter in SUMO2); alternate. Residues Ser24, Ser30, Ser32, and Ser37 each carry the phosphoserine modification. Ser42 bears the Phosphoserine; by RPS6KA1 mark. The interval 92 to 128 (EKATMQNLNDRLASYLDKVRALEEANTELELKIRDWY) is coil 1A. An IF rod domain is found at 92 to 403 (EKATMQNLND…RLLEGEDAHL (312 aa)). Thr118 is subject to Phosphothreonine. Residues 129–146 (QKQAPGPAPDYSSYFKTI) form a linker 1 region. Residues 147-238 (EDLRNKIHTA…NHEEEMKALR (92 aa)) form a coil 1B region. The interval 239–258 (GQVGGEINVEMDAAPGVDLS) is linker 12. The segment at 259–400 (RILNEMRDQY…TYRRLLEGED (142 aa)) is coil 2. A Glycyl lysine isopeptide (Lys-Gly) (interchain with G-Cter in SUMO2) cross-link involves residue Lys286. Thr287 carries the phosphothreonine modification. Ser331 is subject to Phosphoserine. Residues 401–441 (AHLTQYKTKEPVTTRQVRTIVEEVQDGRVISSREQVHQTSH) are tail. Glycyl lysine isopeptide (Lys-Gly) (interchain with G-Cter in SUMO1); alternate cross-links involve residues Lys407 and Lys409. Glycyl lysine isopeptide (Lys-Gly) (interchain with G-Cter in SUMO2); alternate cross-links involve residues Lys407 and Lys409.

This sequence belongs to the intermediate filament family. Heterodimer of a type I and a type II keratin. KRT17 associates with KRT6 isomers (KRT6A or KRT6B). Interacts with TRADD and SFN. In terms of processing, phosphorylation at Ser-42 occurs in a growth- and stress-dependent fashion in skin keratinocytes, it has no effect on filament organization.

It localises to the cytoplasm. Type I keratin involved in the formation and maintenance of various skin appendages, specifically in determining shape and orientation of hair. Required for the correct growth of hair follicles, in particular for the persistence of the anagen (growth) state. Modulates the function of TNF-alpha in the specific context of hair cycling. Regulates protein synthesis and epithelial cell growth through binding to the adapter protein SFN and by stimulating Akt/mTOR pathway. Involved in tissue repair. May be a marker of basal cell differentiation in complex epithelia and therefore indicative of a certain type of epithelial 'stem cells'. Acts as a promoter of epithelial proliferation by acting a regulator of immune response in skin: promotes Th1/Th17-dominated immune environment contributing to the development of basaloid skin tumors. May act as an autoantigen in the immunopathogenesis of psoriasis, with certain peptide regions being a major target for autoreactive T-cells and hence causing their proliferation. The polypeptide is Keratin, type I cytoskeletal 17 (Bos taurus (Bovine)).